The primary structure comprises 351 residues: Nicotinate-nucleotide--dimethylbenzimidazole phosphoribosyltransferase (351 aa).

Residue glutamate 315 is the Proton acceptor of the active site.

It belongs to the CobT family.

It catalyses the reaction 5,6-dimethylbenzimidazole + nicotinate beta-D-ribonucleotide = alpha-ribazole 5'-phosphate + nicotinate + H(+). It functions in the pathway nucleoside biosynthesis; alpha-ribazole biosynthesis; alpha-ribazole from 5,6-dimethylbenzimidazole: step 1/2. Catalyzes the synthesis of alpha-ribazole-5'-phosphate from nicotinate mononucleotide (NAMN) and 5,6-dimethylbenzimidazole (DMB). The polypeptide is Nicotinate-nucleotide--dimethylbenzimidazole phosphoribosyltransferase (Acetivibrio thermocellus (strain ATCC 27405 / DSM 1237 / JCM 9322 / NBRC 103400 / NCIMB 10682 / NRRL B-4536 / VPI 7372) (Clostridium thermocellum)).